A 188-amino-acid polypeptide reads, in one-letter code: NAD(P)H-quinone oxidoreductase subunit J (188 aa).

It belongs to the complex I 30 kDa subunit family. NDH-1 can be composed of about 15 different subunits; different subcomplexes with different compositions have been identified which probably have different functions.

Its subcellular location is the cellular thylakoid membrane. It catalyses the reaction a plastoquinone + NADH + (n+1) H(+)(in) = a plastoquinol + NAD(+) + n H(+)(out). The enzyme catalyses a plastoquinone + NADPH + (n+1) H(+)(in) = a plastoquinol + NADP(+) + n H(+)(out). NDH-1 shuttles electrons from an unknown electron donor, via FMN and iron-sulfur (Fe-S) centers, to quinones in the respiratory and/or the photosynthetic chain. The immediate electron acceptor for the enzyme in this species is believed to be plastoquinone. Couples the redox reaction to proton translocation, and thus conserves the redox energy in a proton gradient. Cyanobacterial NDH-1 also plays a role in inorganic carbon-concentration. The chain is NAD(P)H-quinone oxidoreductase subunit J from Parasynechococcus marenigrum (strain WH8102).